The primary structure comprises 129 residues: Putative redox protein FMP46, mitochondrial (129 aa).

The transit peptide at 1–21 (MSMFRTLQRQPRTISLFTHDL) directs the protein to the mitochondrion. Residue cysteine 94 is part of the active site.

Belongs to the FMP46 family.

It localises to the mitochondrion. Putative mitochondrial redox protein which could be involved in the reduction of small toxic molecules. The protein is Putative redox protein FMP46, mitochondrial (FMP46) of Candida glabrata (strain ATCC 2001 / BCRC 20586 / JCM 3761 / NBRC 0622 / NRRL Y-65 / CBS 138) (Yeast).